Reading from the N-terminus, the 313-residue chain is Protein MFI (313 aa).

In terms of assembly, can homodimerize. Interacts with MFF; the interaction inhibits MFF interaction with DNM1L. Enriched in the pancreatic beta cell and the testis and is expressed at low levels in other tissues tested.

It localises to the cytoplasm. It is found in the cytosol. The protein resides in the mitochondrion outer membrane. Acts as an inhibitor of mitochondrial fission. Interacts with MFF and prevents DNM1L recruitment to mitochondria, promoting a more fused mitochondrial network. In Homo sapiens (Human), this protein is Protein MFI.